The following is a 216-amino-acid chain: 3-isopropylmalate dehydratase small subunit (216 aa).

The protein belongs to the LeuD family. LeuD type 1 subfamily. In terms of assembly, heterodimer of LeuC and LeuD.

It carries out the reaction (2R,3S)-3-isopropylmalate = (2S)-2-isopropylmalate. The protein operates within amino-acid biosynthesis; L-leucine biosynthesis; L-leucine from 3-methyl-2-oxobutanoate: step 2/4. Functionally, catalyzes the isomerization between 2-isopropylmalate and 3-isopropylmalate, via the formation of 2-isopropylmaleate. This chain is 3-isopropylmalate dehydratase small subunit, found in Marinomonas sp. (strain MWYL1).